Reading from the N-terminus, the 145-residue chain is Transcription antitermination protein NusB (145 aa).

The protein belongs to the NusB family.

Involved in transcription antitermination. Required for transcription of ribosomal RNA (rRNA) genes. Binds specifically to the boxA antiterminator sequence of the ribosomal RNA (rrn) operons. This is Transcription antitermination protein NusB from Ruminiclostridium cellulolyticum (strain ATCC 35319 / DSM 5812 / JCM 6584 / H10) (Clostridium cellulolyticum).